The sequence spans 383 residues: uncharacterized protein (383 aa).

The region spanning 58–383 (GKGATRTQAR…RVGRRIRSSI (326 aa)) is the YcaO domain. Positions 80 to 100 (AERKPEDETFTAHPEDCDGLD) are disordered.

This is an uncharacterized protein from Methanothermobacter thermautotrophicus (strain ATCC 29096 / DSM 1053 / JCM 10044 / NBRC 100330 / Delta H) (Methanobacterium thermoautotrophicum).